The following is a 200-amino-acid chain: Elongation factor Ts (200 aa).

An involved in Mg(2+) ion dislocation from EF-Tu region spans residues 82–85; the sequence is TDFV.

Belongs to the EF-Ts family.

It is found in the cytoplasm. Associates with the EF-Tu.GDP complex and induces the exchange of GDP to GTP. It remains bound to the aminoacyl-tRNA.EF-Tu.GTP complex up to the GTP hydrolysis stage on the ribosome. In Solidesulfovibrio magneticus (strain ATCC 700980 / DSM 13731 / RS-1) (Desulfovibrio magneticus), this protein is Elongation factor Ts.